A 165-amino-acid polypeptide reads, in one-letter code: Crossover junction endodeoxyribonuclease RuvC (165 aa).

Catalysis depends on residues Asp-7, Glu-66, and Asp-138. Mg(2+) is bound by residues Asp-7, Glu-66, and Asp-138.

It belongs to the RuvC family. Homodimer which binds Holliday junction (HJ) DNA. The HJ becomes 2-fold symmetrical on binding to RuvC with unstacked arms; it has a different conformation from HJ DNA in complex with RuvA. In the full resolvosome a probable DNA-RuvA(4)-RuvB(12)-RuvC(2) complex forms which resolves the HJ. The cofactor is Mg(2+).

The protein resides in the cytoplasm. It catalyses the reaction Endonucleolytic cleavage at a junction such as a reciprocal single-stranded crossover between two homologous DNA duplexes (Holliday junction).. Functionally, the RuvA-RuvB-RuvC complex processes Holliday junction (HJ) DNA during genetic recombination and DNA repair. Endonuclease that resolves HJ intermediates. Cleaves cruciform DNA by making single-stranded nicks across the HJ at symmetrical positions within the homologous arms, yielding a 5'-phosphate and a 3'-hydroxyl group; requires a central core of homology in the junction. The consensus cleavage sequence is 5'-(A/T)TT(C/G)-3'. Cleavage occurs on the 3'-side of the TT dinucleotide at the point of strand exchange. HJ branch migration catalyzed by RuvA-RuvB allows RuvC to scan DNA until it finds its consensus sequence, where it cleaves and resolves the cruciform DNA. This chain is Crossover junction endodeoxyribonuclease RuvC, found in Ruegeria pomeroyi (strain ATCC 700808 / DSM 15171 / DSS-3) (Silicibacter pomeroyi).